The chain runs to 120 residues: Probable non-functional immunoglobulin kappa variable 2D-24 (120 aa).

The signal sequence occupies residues 1–19; it reads MRLLAQLLGLLMLWVPGSS. The Ig-like domain occupies 20–120; it reads GDIVMTQTPL…YYCTQATQFP (101 aa). The framework-1 stretch occupies residues 21-43; that stretch reads DIVMTQTPLSSPVTLGQPASISF. The segment at 44-59 is complementarity-determining-1; it reads RSSQSLVHSDGNTYLS. A framework-2 region spans residues 60–74; it reads WLQQRPGQPPRLLIY. Residues 75–81 are complementarity-determining-2; that stretch reads KVSNRFS. Positions 82-113 are framework-3; sequence GVPDRFSGSGAGTDFTLKISRVEAEDVGVYYC. Residues 114–120 form a complementarity-determining-3 region; it reads TQATQFP.

As to quaternary structure, most probably, the immunoglobulin is not assembled due to incorrect folding of light chain. Immunoglobulins are composed of two identical heavy chains and two identical light chains; disulfide-linked.

It is found in the secreted. It localises to the cell membrane. Functionally, probable non-functional open reading frame (ORF) of V region of the variable domain of immunoglobulin light chains. Non-functional ORF generally cannot participate in the synthesis of a productive immunoglobulin chain due to altered V-(D)-J or switch recombination and/or splicing site (at mRNA level) and/or conserved amino acid change (protein level). Immunoglobulins, also known as antibodies, are membrane-bound or secreted glycoproteins produced by B lymphocytes. In the recognition phase of humoral immunity, the membrane-bound immunoglobulins serve as receptors which, upon binding of a specific antigen, trigger the clonal expansion and differentiation of B lymphocytes into immunoglobulins-secreting plasma cells. Secreted immunoglobulins mediate the effector phase of humoral immunity, which results in the elimination of bound antigens. The antigen binding site is formed by the variable domain of one heavy chain, together with that of its associated light chain. Thus, each immunoglobulin has two antigen binding sites with remarkable affinity for a particular antigen. The variable domains are assembled by a process called V-(D)-J rearrangement and can then be subjected to somatic hypermutations which, after exposure to antigen and selection, allow affinity maturation for a particular antigen. This Homo sapiens (Human) protein is Probable non-functional immunoglobulin kappa variable 2D-24.